A 370-amino-acid polypeptide reads, in one-letter code: 3-dehydroquinate synthase (370 aa).

NAD(+)-binding positions include 112–116 (GVVGD), 136–137 (TS), lysine 149, lysine 158, and 176–179 (TLRT). Positions 191, 254, and 276 each coordinate Zn(2+).

It belongs to the sugar phosphate cyclases superfamily. Dehydroquinate synthase family. NAD(+) is required as a cofactor. It depends on Co(2+) as a cofactor. The cofactor is Zn(2+).

It is found in the cytoplasm. The enzyme catalyses 7-phospho-2-dehydro-3-deoxy-D-arabino-heptonate = 3-dehydroquinate + phosphate. It participates in metabolic intermediate biosynthesis; chorismate biosynthesis; chorismate from D-erythrose 4-phosphate and phosphoenolpyruvate: step 2/7. Catalyzes the conversion of 3-deoxy-D-arabino-heptulosonate 7-phosphate (DAHP) to dehydroquinate (DHQ). The chain is 3-dehydroquinate synthase from Xanthomonas axonopodis pv. citri (strain 306).